Consider the following 359-residue polypeptide: DNA integrity scanning protein DisA (359 aa).

Positions 7–146 constitute a DAC domain; that stretch reads DDIFRATLAA…GRRYVLDGSA (140 aa). Residues Gly-74, Leu-92, and 105-109 contribute to the ATP site; that span reads TRHRT.

The protein belongs to the DisA family. Homooctamer. Mg(2+) serves as cofactor.

It catalyses the reaction 2 ATP = 3',3'-c-di-AMP + 2 diphosphate. Participates in a DNA-damage check-point that is active prior to asymmetric division when DNA is damaged. DisA forms globular foci that rapidly scan along the chromosomes during sporulation, searching for lesions. When a lesion is present, DisA pauses at the lesion site. This triggers a cellular response that culminates in a temporary block in sporulation initiation. In terms of biological role, also has diadenylate cyclase activity, catalyzing the condensation of 2 ATP molecules into cyclic di-AMP (c-di-AMP). c-di-AMP acts as a signaling molecule that couples DNA integrity with progression of sporulation. The rise in c-di-AMP level generated by DisA while scanning the chromosome, operates as a positive signal that advances sporulation; upon encountering a lesion, the DisA focus arrests at the damaged site and halts c-di-AMP synthesis. The polypeptide is DNA integrity scanning protein DisA (Frankia casuarinae (strain DSM 45818 / CECT 9043 / HFP020203 / CcI3)).